Reading from the N-terminus, the 155-residue chain is MSRRGTTEKQIEKPDPIYRNRLVNLLVNRILRNGKKSLAYRILYGAMRNIRRATKKNPLSVLRQAVRRVTPNVTVKARRVGGSTYQVPIEIESSQGKALAIRWLLVASKKRPGRNMAFKLSYELIDAARDNGNAVRKREETHRMAEANRAFAHFR.

This sequence belongs to the universal ribosomal protein uS7 family. In terms of assembly, part of the 30S ribosomal subunit.

It localises to the plastid. The protein resides in the chloroplast. One of the primary rRNA binding proteins, it binds directly to 16S rRNA where it nucleates assembly of the head domain of the 30S subunit. This Anthoceros angustus (Hornwort) protein is Small ribosomal subunit protein uS7cz/uS7cy (rps7-A).